The following is a 289-amino-acid chain: Thioredoxin-like protein 1 (289 aa).

Positions V2–N109 constitute a Thioredoxin domain. A disulfide bridge links C34 with C37. S113 bears the Phosphoserine mark. In terms of domain architecture, PITH spans E115–K285.

As to quaternary structure, component of the 19S regulatory cap of the 26S proteasome. Interacts with PSMD14/RPN11. Interacts with, and reduces EEF1A1.

Its subcellular location is the cytoplasm. The protein localises to the nucleus. Functionally, active thioredoxin with a redox potential of about -250 mV. The protein is Thioredoxin-like protein 1 (Txnl1) of Mus musculus (Mouse).